The primary structure comprises 558 residues: Formate--tetrahydrofolate ligase (558 aa).

66–73 (TPAGEGKT) lines the ATP pocket.

This sequence belongs to the formate--tetrahydrofolate ligase family.

The enzyme catalyses (6S)-5,6,7,8-tetrahydrofolate + formate + ATP = (6R)-10-formyltetrahydrofolate + ADP + phosphate. It functions in the pathway one-carbon metabolism; tetrahydrofolate interconversion. The sequence is that of Formate--tetrahydrofolate ligase from Neisseria meningitidis serogroup A / serotype 4A (strain DSM 15465 / Z2491).